The chain runs to 382 residues: Na(+)/H(+) antiporter NhaA (382 aa).

The next 11 helical transmembrane spans lie at 14 to 34 (AGGILLVIAAAIAMVIANSAM), 47 to 67 (FGMSVSHWINDGLMAVFFLLI), 87 to 107 (IFPAIAAVGGMLAPALIYVAF), 117 to 137 (GWAIPAATDIAFALGIMALLG), 146 to 166 (VFLLALAIIDDLGVVVIIALF), 171 to 191 (LSTIALTIGFIMTGVLFMLNA), 205 to 225 (LILWIAVLKSGVHATLAGVVI), 247 to 267 (ALHPYVAFAILPVFAFANAGI), 271 to 291 (GVSLAGLTSMLPLGVALGLFL), 321 to 341 (IFAVSVLCGIGFTMSIFISSL), and 353 to 373 (YARLGILMGSTTAALLGYSLL).

Belongs to the NhaA Na(+)/H(+) (TC 2.A.33) antiporter family.

Its subcellular location is the cell inner membrane. It catalyses the reaction Na(+)(in) + 2 H(+)(out) = Na(+)(out) + 2 H(+)(in). Its function is as follows. Na(+)/H(+) antiporter that extrudes sodium in exchange for external protons. The polypeptide is Na(+)/H(+) antiporter NhaA (Vibrio cholerae serotype O1 (strain ATCC 39541 / Classical Ogawa 395 / O395)).